The sequence spans 968 residues: Protein translocase subunit SecA (968 aa).

ATP is bound by residues Gln86, 104-108 (GEGKT), and Asp494. The tract at residues 835–968 (PAESAEESTD…RAAKAAKKRR (134 aa)) is disordered. 2 stretches are compositionally biased toward low complexity: residues 883-892 (ARVATRPAAE) and 910-923 (SAPS…FSEG). Basic residues predominate over residues 956-968 (ARRRAAKAAKKRR).

This sequence belongs to the SecA family. Monomer and homodimer. Part of the essential Sec protein translocation apparatus which comprises SecA, SecYEG and auxiliary proteins SecDF. Other proteins may also be involved.

It localises to the cell membrane. The protein resides in the cytoplasm. It carries out the reaction ATP + H2O + cellular proteinSide 1 = ADP + phosphate + cellular proteinSide 2.. Its function is as follows. Part of the Sec protein translocase complex. Interacts with the SecYEG preprotein conducting channel. Has a central role in coupling the hydrolysis of ATP to the transfer of proteins into and across the cell membrane, serving as an ATP-driven molecular motor driving the stepwise translocation of polypeptide chains across the membrane. The chain is Protein translocase subunit SecA from Beutenbergia cavernae (strain ATCC BAA-8 / DSM 12333 / CCUG 43141 / JCM 11478 / NBRC 16432 / NCIMB 13614 / HKI 0122).